A 380-amino-acid polypeptide reads, in one-letter code: 8-amino-7-oxononanoate synthase (380 aa).

Position 26 (Arg-26) interacts with substrate. Gly-104–Tyr-105 contacts pyridoxal 5'-phosphate. His-129 contributes to the substrate binding site. Residues Ser-175, Asp-200–His-203, and Thr-232–Lys-235 contribute to the pyridoxal 5'-phosphate site. The residue at position 235 (Lys-235) is an N6-(pyridoxal phosphate)lysine. Position 345 (Thr-345) interacts with substrate.

Belongs to the class-II pyridoxal-phosphate-dependent aminotransferase family. BioF subfamily. Homodimer. The cofactor is pyridoxal 5'-phosphate.

The catalysed reaction is 6-carboxyhexanoyl-[ACP] + L-alanine + H(+) = (8S)-8-amino-7-oxononanoate + holo-[ACP] + CO2. It functions in the pathway cofactor biosynthesis; biotin biosynthesis. In terms of biological role, catalyzes the decarboxylative condensation of pimeloyl-[acyl-carrier protein] and L-alanine to produce 8-amino-7-oxononanoate (AON), [acyl-carrier protein], and carbon dioxide. The chain is 8-amino-7-oxononanoate synthase from Mycolicibacterium gilvum (strain PYR-GCK) (Mycobacterium gilvum (strain PYR-GCK)).